Consider the following 708-residue polypeptide: uncharacterized protein (708 aa).

4 disordered regions span residues 1–79 (MHAR…RRSS), 119–301 (AGEF…IHQR), 349–390 (YLSH…GDEN), and 410–461 (SNSF…KRQR). A compositionally biased stretch (pro residues) spans 65–74 (LPPPLPPPPV). Positions 238-249 (DEAQSKTGSSSA) are enriched in polar residues. Residues 260-274 (SKVSEGSSSLSAGSG) are compositionally biased toward low complexity. Over residues 410-419 (SNSFPSSILR) the composition is skewed to polar residues. Residues 442–461 (VGEKRPGEGSDLEEGSKRQR) show a composition bias toward basic and acidic residues.

This is an uncharacterized protein from Arabidopsis thaliana (Mouse-ear cress).